Reading from the N-terminus, the 179-residue chain is Adenine phosphoribosyltransferase (179 aa).

It belongs to the purine/pyrimidine phosphoribosyltransferase family. In terms of assembly, homodimer.

The protein localises to the cytoplasm. It carries out the reaction AMP + diphosphate = 5-phospho-alpha-D-ribose 1-diphosphate + adenine. Its pathway is purine metabolism; AMP biosynthesis via salvage pathway; AMP from adenine: step 1/1. In terms of biological role, catalyzes a salvage reaction resulting in the formation of AMP, that is energically less costly than de novo synthesis. This chain is Adenine phosphoribosyltransferase, found in Bradyrhizobium sp. (strain ORS 278).